A 405-amino-acid chain; its full sequence is Molybdopterin molybdenumtransferase 2 (405 aa).

This sequence belongs to the MoeA family. Mg(2+) is required as a cofactor.

It carries out the reaction adenylyl-molybdopterin + molybdate = Mo-molybdopterin + AMP + H(+). Its pathway is cofactor biosynthesis; molybdopterin biosynthesis. Its function is as follows. Catalyzes the insertion of molybdate into adenylated molybdopterin with the concomitant release of AMP. This chain is Molybdopterin molybdenumtransferase 2 (moaE2), found in Mycobacterium tuberculosis (strain CDC 1551 / Oshkosh).